The primary structure comprises 291 residues: MAKGRVADRSPTEMLHSTPAGDRAVRTQGSAAPGSKDHLNEKPCAEAGSARTSLLILVSIFSCAAFVMFLVYKNFPQLSEEERVNMKVPRDMDDAKALGKVLSKYKDTFYVQVLVAYFATYIFLQTFAIPGSIFLSILSGFLYPFPLALFLVCLCSGLGASFCYMLSYLVGRPVVYKYLTEKAVKWSQQVERHREHLINYIIFLRITPFLPNWFINITSPVINVPLKVFFIGTFLGVAPPSFVAIKAGTTLHQLTTAGEAVSWSSVFILMVLALLSILPAIFQKQLKQKFE.

Residues 1–11 (MAKGRVADRSP) are compositionally biased toward basic and acidic residues. The interval 1-43 (MAKGRVADRSPTEMLHSTPAGDRAVRTQGSAAPGSKDHLNEKP) is disordered. Residue Thr-18 is modified to Phosphothreonine. At Ser-35 the chain carries Phosphoserine. The next 6 helical transmembrane spans lie at 52–72 (TSLL…FLVY), 109–129 (FYVQ…TFAI), 147–169 (LALF…LSYL), 197–217 (LINY…FINI), 225–245 (PLKV…FVAI), and 262–282 (SWSS…PAIF). The segment at 140 to 251 (GFLYPFPLAL…FVAIKAGTTL (112 aa)) is VTT domain; required for its function in autophagy.

Belongs to the TMEM41 family. In terms of assembly, interacts with VMP1. Interacts with COPA, COPB1, VDAC1 and ERLIN2. Interacts with ATG2A. Interacts with SURF4. In terms of tissue distribution, expressed in brain, spinal cord, kidney and first lumbar dorsal root ganglia during postnatal development. Expressed in motor neurons and proprioceptive neurons.

The protein resides in the endoplasmic reticulum membrane. It is found in the endomembrane system. The enzyme catalyses a 1,2-diacyl-sn-glycero-3-phospho-L-serine(in) = a 1,2-diacyl-sn-glycero-3-phospho-L-serine(out). It carries out the reaction cholesterol(in) = cholesterol(out). It catalyses the reaction a 1,2-diacyl-sn-glycero-3-phosphocholine(in) = a 1,2-diacyl-sn-glycero-3-phosphocholine(out). The catalysed reaction is a 1,2-diacyl-sn-glycero-3-phosphoethanolamine(in) = a 1,2-diacyl-sn-glycero-3-phosphoethanolamine(out). Functionally, phospholipid scramblase involved in lipid homeostasis and membrane dynamics processes. Has phospholipid scramblase activity toward cholesterol and phosphatidylserine, as well as phosphatidylethanolamine and phosphatidylcholine. Required for autophagosome formation: participates in early stages of autophagosome biogenesis at the endoplasmic reticulum (ER) membrane by reequilibrating the leaflets of the ER as lipids are extracted by ATG2 (ATG2A or ATG2B) to mediate autophagosome assembly. In addition to autophagy, involved in other processes in which phospholipid scramblase activity is required. Required for normal motor neuron development. The sequence is that of Transmembrane protein 41B from Mus musculus (Mouse).